We begin with the raw amino-acid sequence, 1012 residues long: Putative cellulose synthase-like protein D5 (1012 aa).

The interval 1–85 (MSGDYANYTV…APSSNKSLLV (85 aa)) is disordered. A compositionally biased stretch (low complexity) spans 20 to 37 (PSGGAPPAAPSAGGARPG). Residues 57-69 (GGGDDGAKMDRRL) are compositionally biased toward basic and acidic residues. 2 helical membrane-spanning segments follow: residues 150 to 170 (ILSP…LFLV) and 180 to 200 (ALWL…SWLL). Residue Asp280 is part of the active site. Residues 597 to 620 (PRQGSEAMPGAGGGRSGGGSVGGD) form a disordered region. Residues 606 to 618 (GAGGGRSGGGSVG) are compositionally biased toward gly residues. Asp717 is a catalytic residue. Transmembrane regions (helical) follow at residues 799–819 (LFLI…QFIV), 825–845 (TFLS…LLEV), 871–891 (LAAV…SFTL), 914–934 (SLFI…VVGV), 948–968 (LLGG…FAKG), and 978–998 (TIVY…WITI).

This sequence belongs to the glycosyltransferase 2 family. Plant cellulose synthase-like D subfamily.

The protein resides in the golgi apparatus membrane. In terms of biological role, thought to be a Golgi-localized beta-glycan synthase that polymerize the backbones of noncellulosic polysaccharides (hemicelluloses) of plant cell wall. This is Putative cellulose synthase-like protein D5 (CSLD5) from Oryza sativa subsp. indica (Rice).